A 101-amino-acid chain; its full sequence is Putative pterin-4-alpha-carbinolamine dehydratase (101 aa).

The protein belongs to the pterin-4-alpha-carbinolamine dehydratase family.

The enzyme catalyses (4aS,6R)-4a-hydroxy-L-erythro-5,6,7,8-tetrahydrobiopterin = (6R)-L-erythro-6,7-dihydrobiopterin + H2O. The protein is Putative pterin-4-alpha-carbinolamine dehydratase of Ralstonia pickettii (strain 12J).